The sequence spans 533 residues: Acetone monooxygenase (methyl acetate-forming) (533 aa).

FAD contacts are provided by residues 43-46 (TWYW), 55-56 (DS), and Tyr-61. 53-55 (RFD) contacts NADP(+). Residues 183 to 189 (NGATGIQ), 206 to 207 (RT), and Trp-492 contribute to the NADP(+) site.

This sequence belongs to the FAD-binding monooxygenase family. In terms of assembly, homotetramer. Requires FAD as cofactor.

It carries out the reaction acetone + NADPH + O2 + H(+) = methyl acetate + NADP(+) + H2O. Functionally, plays an important role in the metabolism of acetone derived from propane oxidation. Catalyzes the oxidation of acetone to methyl acetate. Exhibits high catalytic efficiency towards various linear and cyclic ketones, such as butanone, 2-pentanone, 2-heptanone, 2-octanone, 2-nonanone, 2-decanone, cyclobutanone, cyclopentanone and cyclohexanone. Elicits the highest catalytic efficiency towards butanone and cyclobutanone. Is highly specific for NADPH and cannot use NADH. This chain is Acetone monooxygenase (methyl acetate-forming), found in Gordonia sp. (strain TY-5).